We begin with the raw amino-acid sequence, 72 residues long: Nod factor export ATP-binding protein I (72 aa).

Belongs to the ABC transporter superfamily. Lipooligosaccharide exporter (TC 3.A.1.102) family. The complex is composed of two ATP-binding proteins (NodI) and two transmembrane proteins (NodJ).

The protein localises to the cell inner membrane. In terms of biological role, part of the ABC transporter complex NodIJ involved in the export of the nodulation factors (Nod factors), the bacterial signal molecules that induce symbiosis and subsequent nodulation induction. Nod factors are LCO (lipo-chitin oligosaccharide), a modified beta-1,4-linked N-acetylglucosamine oligosaccharide. This subunit is responsible for energy coupling to the transport system. In Rhizobium leguminosarum bv. trifolii, this protein is Nod factor export ATP-binding protein I.